Here is an 83-residue protein sequence, read N- to C-terminus: High-potential iron-sulfur protein (83 aa).

Positions 43, 46, 61, and 75 each coordinate [4Fe-4S] cluster.

The protein belongs to the high-potential iron-sulfur protein (HiPIP) family. As to quaternary structure, homodimer.

The protein resides in the periplasm. Its function is as follows. Specific class of high-redox-potential 4Fe-4S ferredoxins. Functions in anaerobic electron transport in most purple and in some other photosynthetic bacteria and in at least one genus (Paracoccus) of halophilic, denitrifying bacteria. This Thiocystis violacea protein is High-potential iron-sulfur protein.